The following is a 307-amino-acid chain: Mycothiol acetyltransferase (307 aa).

2 consecutive N-acetyltransferase domains span residues 15-158 (HTLD…LAEP) and 164-307 (VTVR…RTES). 1D-myo-inositol 2-(L-cysteinylamino)-2-deoxy-alpha-D-glucopyranoside is bound at residue glutamate 46. Residue 90-92 (LVV) participates in acetyl-CoA binding. Glutamate 191, lysine 230, and glutamate 239 together coordinate 1D-myo-inositol 2-(L-cysteinylamino)-2-deoxy-alpha-D-glucopyranoside. Acetyl-CoA contacts are provided by residues 243–245 (VGV) and 250–256 (QGGGLGK). Tyrosine 277 contributes to the 1D-myo-inositol 2-(L-cysteinylamino)-2-deoxy-alpha-D-glucopyranoside binding site.

The protein belongs to the acetyltransferase family. MshD subfamily. As to quaternary structure, monomer.

It carries out the reaction 1D-myo-inositol 2-(L-cysteinylamino)-2-deoxy-alpha-D-glucopyranoside + acetyl-CoA = mycothiol + CoA + H(+). In terms of biological role, catalyzes the transfer of acetyl from acetyl-CoA to desacetylmycothiol (Cys-GlcN-Ins) to form mycothiol. The sequence is that of Mycothiol acetyltransferase from Streptomyces griseus subsp. griseus (strain JCM 4626 / CBS 651.72 / NBRC 13350 / KCC S-0626 / ISP 5235).